The following is a 384-amino-acid chain: Cytochrome b (384 aa).

The next 4 membrane-spanning stretches (helical) occupy residues 32–52 (LGSLLGLCLVIQITTGIFLAM), 76–98 (WLIRYMHTNGASFFFICMYIHIG), 113–133 (VWTVGVIIFILTMAAAFLGYC), and 179–199 (FFTFHYLVPFIIAAMVIMHLM). Heme b contacts are provided by His82 and His96. Heme b-binding residues include His183 and His197. Position 202 (His202) interacts with a ubiquinone. The next 4 helical transmembrane spans lie at 225–245 (FIFKDLVTVFVFMIFFSLFVF), 289–309 (LGGVITMFGTILVLLMLPITD), 321–341 (LSKFFFFLFITNFILLGKLGE), and 348–368 (FILMGQICTFIYFAYFLILVP).

Belongs to the cytochrome b family. As to quaternary structure, fungal cytochrome b-c1 complex contains 10 subunits; 3 respiratory subunits, 2 core proteins and 5 low-molecular weight proteins. Cytochrome b-c1 complex is a homodimer. Requires heme b as cofactor.

Its subcellular location is the mitochondrion inner membrane. In terms of biological role, component of the ubiquinol-cytochrome c reductase complex (complex III or cytochrome b-c1 complex) that is part of the mitochondrial respiratory chain. The b-c1 complex mediates electron transfer from ubiquinol to cytochrome c. Contributes to the generation of a proton gradient across the mitochondrial membrane that is then used for ATP synthesis. This Eremothecium gossypii (strain ATCC 10895 / CBS 109.51 / FGSC 9923 / NRRL Y-1056) (Yeast) protein is Cytochrome b (COB).